Here is a 1267-residue protein sequence, read N- to C-terminus: Ankyrin repeat and ELMO domain-containing protein D (1267 aa).

One can recognise an ELMO domain in the interval 307–466; it reads SHQRLLETLW…FVSGLASEVL (160 aa). The span at 486 to 496 shows a compositional bias: basic and acidic residues; sequence KKKEKKSEKRG. A disordered region spans residues 486–598; it reads KKKEKKSEKR…NNHILNNNHL (113 aa). Low complexity predominate over residues 507–598; sequence GSNGNINSTT…NNHILNNNHL (92 aa). ANK repeat units lie at residues 655–685, 689–718, 767–796, and 801–830; these read DGNS…FLNT, QGLT…DPFI, TLET…NINN, and SGQN…DPSI. Disordered stretches follow at residues 854–908, 924–1040, 1057–1082, and 1103–1215; these read NPTK…NSTS, TSIN…SPIF, SPTQ…NGAE, and ENLT…PPKD. Composition is skewed to low complexity over residues 859–870, 895–908, and 924–1033; these read SRSTSSTSSSTS, ITNN…NSTS, and TSIN…STSP. Over residues 1057–1080 the composition is skewed to polar residues; the sequence is SPTQESPQVISTPTSPPYLSNNNG. 2 stretches are compositionally biased toward low complexity: residues 1108-1176 and 1184-1213; these read NSGN…IGSH and HNGP…VTPP.

This Dictyostelium discoideum (Social amoeba) protein is Ankyrin repeat and ELMO domain-containing protein D (elmoD).